A 1257-amino-acid polypeptide reads, in one-letter code: Neural cell adhesion molecule L1 (1257 aa).

The first 19 residues, 1-19 (MVVALRYVWPLLLCSPCLL), serve as a signal peptide directing secretion. The Extracellular segment spans residues 20–1120 (IQIPEEYEGH…RLPPAGFATE (1101 aa)). Ig-like C2-type domains lie at 35–125 (PVIT…TAMS), 139–226 (PKET…EPID), 240–328 (PRLL…YYVT), 333–420 (PYWL…AYIY), 425–507 (PAKI…NNVT), and 518–607 (TQIT…AQLL). Disulfide bonds link cysteine 57–cysteine 114 and cysteine 158–cysteine 209. N-linked (GlcNAc...) asparagine glycans are attached at residues asparagine 100, asparagine 203, asparagine 247, and asparagine 294. Intrachain disulfides connect cysteine 264/cysteine 312 and cysteine 354/cysteine 404. 4 N-linked (GlcNAc...) asparagine glycosylation sites follow: asparagine 433, asparagine 479, asparagine 490, and asparagine 505. Cysteines 448 and 497 form a disulfide. Cysteine 539 and cysteine 591 form a disulfide bridge. A Cell attachment site motif is present at residues 554–556 (RGD). N-linked (GlcNAc...) asparagine glycans are attached at residues asparagine 588 and asparagine 671. Fibronectin type-III domains lie at 615-712 (VPRL…TPEA), 717-810 (NPVD…SGED), 814-916 (AIPE…TPEG), 920-1015 (HPEA…MALS), and 1016-1115 (GISD…LPPA). Residues 698 to 725 (GEPSPVSETVVTPEAAPEKNPVDVKGEG) are disordered. A compositionally biased stretch (basic and acidic residues) spans 713–725 (APEKNPVDVKGEG). N-linked (GlcNAc...) asparagine glycans are attached at residues asparagine 726, asparagine 777, asparagine 825, asparagine 849, asparagine 876, asparagine 979, asparagine 1022, asparagine 1030, asparagine 1071, and asparagine 1105. A helical membrane pass occupies residues 1121–1143 (GWFIGFVSAIILLLLVLLILCFI). Residues 1144–1257 (KRSKGGKYSV…SPINPAVALE (114 aa)) lie on the Cytoplasmic side of the membrane. Serine 1163, threonine 1172, arginine 1177, and serine 1178 each carry phosphoserine. Basic and acidic residues predominate over residues 1176–1187 (YRSLESDNEEKA). Disordered regions lie at residues 1176-1207 (YRSL…SDDS) and 1226-1257 (IGQY…VALE). The residue at position 1181 (serine 1181) is a Phosphoserine; by CaMK2. Residues serine 1194, serine 1243, serine 1244, and serine 1248 each carry the phosphoserine modification. A compositionally biased stretch (polar residues) spans 1241 to 1250 (NDSSGATSPI).

Belongs to the immunoglobulin superfamily. L1/neurofascin/NgCAM family. In terms of assembly, interacts with SHTN1; the interaction occurs in axonal growth cones. Interacts with isoform 2 of BSG.

It is found in the cell membrane. It localises to the cell projection. The protein resides in the growth cone. Its subcellular location is the axon. The protein localises to the dendrite. In terms of biological role, neural cell adhesion molecule involved in the dynamics of cell adhesion and in the generation of transmembrane signals at tyrosine kinase receptors. During brain development, critical in multiple processes, including neuronal migration, axonal growth and fasciculation, and synaptogenesis. In the mature brain, plays a role in the dynamics of neuronal structure and function, including synaptic plasticity. This chain is Neural cell adhesion molecule L1 (L1CAM), found in Homo sapiens (Human).